The chain runs to 949 residues: RNA polymerase-associated protein RapA (949 aa).

Residues 164–332 (EVADRIAPRV…FARLRLLDPN (169 aa)) enclose the Helicase ATP-binding domain. 177 to 184 (DEVGLGKT) contacts ATP. Residues 278-281 (DEAH) carry the DEAH box motif. Residues 474 to 628 (RVEWLIDQLK…TCPTGNALQH (155 aa)) form the Helicase C-terminal domain.

Belongs to the SNF2/RAD54 helicase family. RapA subfamily. As to quaternary structure, interacts with the RNAP. Has a higher affinity for the core RNAP than for the holoenzyme. Its ATPase activity is stimulated by binding to RNAP.

Transcription regulator that activates transcription by stimulating RNA polymerase (RNAP) recycling in case of stress conditions such as supercoiled DNA or high salt concentrations. Probably acts by releasing the RNAP, when it is trapped or immobilized on tightly supercoiled DNA. Does not activate transcription on linear DNA. Probably not involved in DNA repair. This Pseudomonas fluorescens (strain ATCC BAA-477 / NRRL B-23932 / Pf-5) protein is RNA polymerase-associated protein RapA.